We begin with the raw amino-acid sequence, 628 residues long: ATP-dependent zinc metalloprotease FtsH 4 (628 aa).

Residues 1–14 lie on the Cytoplasmic side of the membrane; sequence MAIKPQPQWQRRLA. Residues 15 to 35 traverse the membrane as a helical segment; it reads SVLLWGSTIYLLVNLLAPALF. Residues 36–119 lie on the Lumenal side of the membrane; that stretch reads RSQPPQVPYS…AAAPPAKNSW (84 aa). Residues 120–140 form a helical membrane-spanning segment; sequence FGTLLSWVIPPLIFVGIWSFF. Topologically, residues 141–628 are cytoplasmic; it reads LNRNNNGAPG…QVQAPGTLVV (488 aa). 214–221 lines the ATP pocket; the sequence is GPPGTGKT. His438 contacts Zn(2+). Residue Glu439 is part of the active site. Positions 442 and 515 each coordinate Zn(2+).

It in the central section; belongs to the AAA ATPase family. In the C-terminal section; belongs to the peptidase M41 family. In terms of assembly, homohexamer. Zn(2+) is required as a cofactor.

The protein localises to the cellular thylakoid membrane. In terms of biological role, acts as a processive, ATP-dependent zinc metallopeptidase for both cytoplasmic and membrane proteins. Plays a role in the quality control of integral membrane proteins. The chain is ATP-dependent zinc metalloprotease FtsH 4 from Synechocystis sp. (strain ATCC 27184 / PCC 6803 / Kazusa).